Consider the following 140-residue polypeptide: MNIALIAHDEKKEDMIQFTTAYTHVLSKHRLFATGTTGMKISNATGLQIHRFQSGPLGGDQQIGAMIANGEMDMIIFFRDPLTAQPHEPDVSALMRLCDVHQIPLVTNIAGAEIFIHGLSRGDLKWREIIKERQEKEGTP.

Positions 1 to 140 (MNIALIAHDE…KERQEKEGTP (140 aa)) constitute an MGS-like domain. Residues His8, Lys12, 34-37 (TGTT), and 54-55 (SG) contribute to the substrate site. Asp60 acts as the Proton donor/acceptor in catalysis. A substrate-binding site is contributed by His87.

The protein belongs to the methylglyoxal synthase family.

It catalyses the reaction dihydroxyacetone phosphate = methylglyoxal + phosphate. In terms of biological role, catalyzes the formation of methylglyoxal from dihydroxyacetone phosphate. The chain is Methylglyoxal synthase from Oceanobacillus iheyensis (strain DSM 14371 / CIP 107618 / JCM 11309 / KCTC 3954 / HTE831).